The following is a 31-amino-acid chain: Cytochrome b6-f complex subunit 6 (31 aa).

A helical membrane pass occupies residues 3 to 23; sequence IITSYFGFLLTALTIASALFI.

The protein belongs to the PetL family. The 4 large subunits of the cytochrome b6-f complex are cytochrome b6, subunit IV (17 kDa polypeptide, PetD), cytochrome f and the Rieske protein, while the 4 small subunits are PetG, PetL, PetM and PetN. The complex functions as a dimer.

It is found in the plastid. It localises to the chloroplast thylakoid membrane. Component of the cytochrome b6-f complex, which mediates electron transfer between photosystem II (PSII) and photosystem I (PSI), cyclic electron flow around PSI, and state transitions. PetL is important for photoautotrophic growth as well as for electron transfer efficiency and stability of the cytochrome b6-f complex. This Helianthus annuus (Common sunflower) protein is Cytochrome b6-f complex subunit 6.